A 504-amino-acid polypeptide reads, in one-letter code: Cytochrome P450 4A2 (504 aa).

Positions 1-4 (MGFS) are excised as a propeptide. A heme-binding site is contributed by glutamate 315. At serine 434 the chain carries Phosphoserine. Cysteine 451 is a binding site for heme.

Belongs to the cytochrome P450 family. It depends on heme as a cofactor.

Its subcellular location is the endoplasmic reticulum membrane. It localises to the microsome membrane. It carries out the reaction an omega-methyl-long-chain fatty acid + reduced [NADPH--hemoprotein reductase] + O2 = an omega-hydroxy-long-chain fatty acid + oxidized [NADPH--hemoprotein reductase] + H2O + H(+). The enzyme catalyses dodecanoate + reduced [NADPH--hemoprotein reductase] + O2 = (11R)-hydroxydodecanoate + oxidized [NADPH--hemoprotein reductase] + H2O + H(+). It catalyses the reaction dodecanoate + reduced [NADPH--hemoprotein reductase] + O2 = 12-hydroxydodecanoate + oxidized [NADPH--hemoprotein reductase] + H2O + H(+). The catalysed reaction is tetradecanoate + reduced [NADPH--hemoprotein reductase] + O2 = 14-hydroxytetradecanoate + oxidized [NADPH--hemoprotein reductase] + H2O + H(+). It carries out the reaction hexadecanoate + reduced [NADPH--hemoprotein reductase] + O2 = 16-hydroxyhexadecanoate + oxidized [NADPH--hemoprotein reductase] + H2O + H(+). It functions in the pathway lipid metabolism; fatty acid metabolism. Its function is as follows. A cytochrome P450 monooxygenase that catalyzes omega and omega-1 hydroxylation of saturated fatty acids. Exhibits preferential omega versus omega-1 regioselectivity and (R) versus (S) stereoselectivity for hydroxylation of lauric and myristic acids. Has low activity toward palmitic acid. Mechanistically, uses molecular oxygen inserting one oxygen atom into a substrate, and reducing the second into a water molecule, with two electrons provided by NADPH via cytochrome P450 reductase (CPR; NADPH-ferrihemoprotein reductase). The polypeptide is Cytochrome P450 4A2 (Rattus norvegicus (Rat)).